Reading from the N-terminus, the 396-residue chain is Alanine racemase (396 aa).

Lysine 46 acts as the Proton acceptor; specific for D-alanine in catalysis. Lysine 46 carries the post-translational modification N6-(pyridoxal phosphate)lysine. Arginine 145 serves as a coordination point for substrate. Tyrosine 280 acts as the Proton acceptor; specific for L-alanine in catalysis. Methionine 328 provides a ligand contact to substrate.

It belongs to the alanine racemase family. The cofactor is pyridoxal 5'-phosphate.

It catalyses the reaction L-alanine = D-alanine. Its pathway is amino-acid biosynthesis; D-alanine biosynthesis; D-alanine from L-alanine: step 1/1. In terms of biological role, catalyzes the interconversion of L-alanine and D-alanine. May also act on other amino acids. This is Alanine racemase (alr) from Brucella canis (strain ATCC 23365 / NCTC 10854 / RM-666).